The primary structure comprises 407 residues: Tryptophan synthase beta chain (407 aa).

Residue lysine 98 is modified to N6-(pyridoxal phosphate)lysine.

It belongs to the TrpB family. Tetramer of two alpha and two beta chains. It depends on pyridoxal 5'-phosphate as a cofactor.

The enzyme catalyses (1S,2R)-1-C-(indol-3-yl)glycerol 3-phosphate + L-serine = D-glyceraldehyde 3-phosphate + L-tryptophan + H2O. The protein operates within amino-acid biosynthesis; L-tryptophan biosynthesis; L-tryptophan from chorismate: step 5/5. In terms of biological role, the beta subunit is responsible for the synthesis of L-tryptophan from indole and L-serine. The polypeptide is Tryptophan synthase beta chain (Bradyrhizobium sp. (strain BTAi1 / ATCC BAA-1182)).